The primary structure comprises 1059 residues: Carbamoyl phosphate synthase large chain (1059 aa).

Positions 1–401 (MPKRQDISKI…AMLKAVRSLE (401 aa)) are carboxyphosphate synthetic domain. Residues Arg-129, Arg-169, Gly-175, Gly-176, Arg-208, Ile-210, Glu-215, Gly-241, Ile-242, His-243, Gln-284, and Glu-298 each contribute to the ATP site. Residues 133–327 (KALMERLNEP…IAKMAAKIAV (195 aa)) form the ATP-grasp 1 domain. The Mg(2+) site is built by Gln-284, Glu-298, and Asn-300. 3 residues coordinate Mn(2+): Gln-284, Glu-298, and Asn-300. Residues 402–546 (IGAIGLDDIT…YATYEQENES (145 aa)) are oligomerization domain. Positions 547-929 (IISTKKSVLV…ALYKAFIASN (383 aa)) are carbamoyl phosphate synthetic domain. The ATP-grasp 2 domain maps to 671 to 861 (DQVIKELALP…LAQLATRVML (191 aa)). Residues Arg-707, Ser-746, Leu-748, Glu-752, Gly-777, Val-778, His-779, Ser-780, Gln-820, and Glu-832 each contribute to the ATP site. Gln-820, Glu-832, and Asn-834 together coordinate Mg(2+). 3 residues coordinate Mn(2+): Gln-820, Glu-832, and Asn-834. The MGS-like domain occupies 930–1059 (IKVPRYGNVL…SRSFTVKEMH (130 aa)). The segment at 930 to 1059 (IKVPRYGNVL…SRSFTVKEMH (130 aa)) is allosteric domain.

This sequence belongs to the CarB family. In terms of assembly, composed of two chains; the small (or glutamine) chain promotes the hydrolysis of glutamine to ammonia, which is used by the large (or ammonia) chain to synthesize carbamoyl phosphate. Tetramer of heterodimers (alpha,beta)4. Mg(2+) serves as cofactor. Mn(2+) is required as a cofactor.

The catalysed reaction is hydrogencarbonate + L-glutamine + 2 ATP + H2O = carbamoyl phosphate + L-glutamate + 2 ADP + phosphate + 2 H(+). It carries out the reaction hydrogencarbonate + NH4(+) + 2 ATP = carbamoyl phosphate + 2 ADP + phosphate + 2 H(+). It functions in the pathway amino-acid biosynthesis; L-arginine biosynthesis; carbamoyl phosphate from bicarbonate: step 1/1. It participates in pyrimidine metabolism; UMP biosynthesis via de novo pathway; (S)-dihydroorotate from bicarbonate: step 1/3. Its function is as follows. Large subunit of the glutamine-dependent carbamoyl phosphate synthetase (CPSase). CPSase catalyzes the formation of carbamoyl phosphate from the ammonia moiety of glutamine, carbonate, and phosphate donated by ATP, constituting the first step of 2 biosynthetic pathways, one leading to arginine and/or urea and the other to pyrimidine nucleotides. The large subunit (synthetase) binds the substrates ammonia (free or transferred from glutamine from the small subunit), hydrogencarbonate and ATP and carries out an ATP-coupled ligase reaction, activating hydrogencarbonate by forming carboxy phosphate which reacts with ammonia to form carbamoyl phosphate. The chain is Carbamoyl phosphate synthase large chain from Leuconostoc mesenteroides subsp. mesenteroides (strain ATCC 8293 / DSM 20343 / BCRC 11652 / CCM 1803 / JCM 6124 / NCDO 523 / NBRC 100496 / NCIMB 8023 / NCTC 12954 / NRRL B-1118 / 37Y).